The primary structure comprises 769 residues: Phenylalanine--tRNA ligase beta subunit (769 aa).

Residues 40–141 form the tRNA-binding domain; it reads GKLLTIARVA…GEPIPGCEPD (102 aa). Residues 389–467 form the B5 domain; the sequence is PAPPPIELPL…RMIGYDSIAP (79 aa). 4 residues coordinate Mg(2+): aspartate 445, aspartate 451, glutamate 454, and glutamate 455. The FDX-ACB domain occupies 676 to 768; sequence RRYPSSAFDL…GMRAKGYELR (93 aa).

Belongs to the phenylalanyl-tRNA synthetase beta subunit family. Type 1 subfamily. As to quaternary structure, tetramer of two alpha and two beta subunits. Mg(2+) is required as a cofactor.

The protein resides in the cytoplasm. It carries out the reaction tRNA(Phe) + L-phenylalanine + ATP = L-phenylalanyl-tRNA(Phe) + AMP + diphosphate + H(+). The protein is Phenylalanine--tRNA ligase beta subunit of Solibacter usitatus (strain Ellin6076).